A 118-amino-acid chain; its full sequence is Non-specific lipid-transfer protein 2 (118 aa).

Residues 1 to 25 form the signal peptide; sequence MAGVMKLACMVLACMIVAGPITANA. 4 disulfides stabilise this stretch: Cys-29/Cys-76, Cys-39/Cys-53, Cys-54/Cys-100, and Cys-74/Cys-114.

It belongs to the plant LTP family.

In terms of biological role, plant non-specific lipid-transfer proteins transfer phospholipids as well as galactolipids across membranes. May play a role in wax or cutin deposition in the cell walls of expanding epidermal cells and certain secretory tissues. This Arabidopsis thaliana (Mouse-ear cress) protein is Non-specific lipid-transfer protein 2 (LTP2).